The primary structure comprises 345 residues: Phenylalanine--tRNA ligase alpha subunit (345 aa).

Residue Glu253 coordinates Mg(2+).

The protein belongs to the class-II aminoacyl-tRNA synthetase family. Phe-tRNA synthetase alpha subunit type 1 subfamily. Tetramer of two alpha and two beta subunits. It depends on Mg(2+) as a cofactor.

The protein resides in the cytoplasm. The enzyme catalyses tRNA(Phe) + L-phenylalanine + ATP = L-phenylalanyl-tRNA(Phe) + AMP + diphosphate + H(+). This is Phenylalanine--tRNA ligase alpha subunit from Nitratidesulfovibrio vulgaris (strain DSM 19637 / Miyazaki F) (Desulfovibrio vulgaris).